Reading from the N-terminus, the 410-residue chain is Translation initiation factor 2 subunit gamma (410 aa).

A tr-type G domain is found at 6 to 203 (QSEVNIGMVG…AIQDFIPTPE (198 aa)). A G1 region spans residues 15–22 (GHVDHGKT). Mg(2+) is bound by residues Asp-18, Thr-22, Gly-43, and Ser-45. 18–23 (DHGKTS) contacts GTP. The G2 stretch occupies residues 43-47 (GISIR). 4 residues coordinate Zn(2+): Cys-58, Cys-61, Cys-73, and Cys-76. Residues 90–93 (DAPG) are G3. Residues 146–149 (NKID) and 181–183 (SAH) each bind GTP. A G4 region spans residues 146-149 (NKID). Residues 181 to 183 (SAH) form a G5 region.

The protein belongs to the TRAFAC class translation factor GTPase superfamily. Classic translation factor GTPase family. EIF2G subfamily. In terms of assembly, heterotrimer composed of an alpha, a beta and a gamma chain. The cofactor is Mg(2+).

The enzyme catalyses GTP + H2O = GDP + phosphate + H(+). Functionally, eIF-2 functions in the early steps of protein synthesis by forming a ternary complex with GTP and initiator tRNA. The protein is Translation initiation factor 2 subunit gamma of Methanococcus maripaludis (strain DSM 14266 / JCM 13030 / NBRC 101832 / S2 / LL).